Reading from the N-terminus, the 196-residue chain is dTTP/UTP pyrophosphatase (196 aa).

Asp-76 acts as the Proton acceptor in catalysis.

This sequence belongs to the Maf family. YhdE subfamily. A divalent metal cation is required as a cofactor.

It is found in the cytoplasm. It catalyses the reaction dTTP + H2O = dTMP + diphosphate + H(+). The enzyme catalyses UTP + H2O = UMP + diphosphate + H(+). Functionally, nucleoside triphosphate pyrophosphatase that hydrolyzes dTTP and UTP. May have a dual role in cell division arrest and in preventing the incorporation of modified nucleotides into cellular nucleic acids. The polypeptide is dTTP/UTP pyrophosphatase (Chlorobium chlorochromatii (strain CaD3)).